Reading from the N-terminus, the 57-residue chain is Probable antitoxin MazE1 (57 aa).

Forms a complex with cognate toxin MazF1.

Antitoxin component of a type II toxin-antitoxin (TA) system. This Mycobacterium tuberculosis (strain ATCC 25618 / H37Rv) protein is Probable antitoxin MazE1 (mazE1).